Consider the following 171-residue polypeptide: Calcium channel flower homolog (171 aa).

The Cytoplasmic portion of the chain corresponds to 1 to 31 (MSGSGAAGAAAGPAPPAQEEGMTWWYRWLCR). Residues 32-52 (LAGVLGAVSCAISGLFNCVTI) traverse the membrane as a helical segment. At 53–56 (HPLN) the chain is on the extracellular side. A helical transmembrane segment spans residues 57–77 (IAAGVWMIMNAFILLLCEAPF). The Cytoplasmic segment spans residues 78 to 101 (CCQFVEFANTVAEKVDRLRSWQKA). Residues 102–122 (VFYCGMAIVPIVMSLTLTTLL) form a helical membrane-spanning segment. Topologically, residues 123 to 124 (GN) are extracellular. The helical transmembrane segment at 125–141 (AIAFATGVLYGLSALGK) threads the bilayer. Over 142-171 (KGDAISYARIQQQRQQADEEKLAETFEGEL) the chain is Cytoplasmic.

This sequence belongs to the calcium channel flower family. Interacts with adaptor protein complex 2 (AP-2). Expressed in neurons in the brain (at protein level). Expressed in neuroblastoma cell lines (at protein level). Expressed in cytotoxic T-lymphoocytes (at protein level). In terms of tissue distribution, low levels of expression in various tissues including the brain, eye, heart, liver and colon. Expression in the heart is at slightly higher levels than isoform 3. Expressed in skin cells. As to expression, very low levels of expression in the brain, liver and eye. Detected at very low levels of expression in skin cells. Expressed in various tissues, with highest levels of expression in the brain and eye. Expressed in skin cells. Low levels of expression in the liver, colon, heart and spleen. In terms of tissue distribution, barely detected in the brain and liver.

Its subcellular location is the cell membrane. It localises to the vesicle. Transmembrane protein which mediates synaptic endocytosis and fitness-based cell culling. In response to different stimulus strengths, controls two major modes of synaptic vesicle (SV) retrieval in hippocampal neurons; Clathrin-mediated endocytosis (CME) in response to mild stimulation and activity-dependent bulk endocytosis (ADBE) in response to strong stimulation. In cytotoxic T-lymphoocytes (CTLs) facilitates calcium-dependent endocytosis of cytotoxic granules (CGs) at the immuno synapse. Different isoforms work as fitness fingerprints in 'loser' and 'winner' cells and thereby mediate win/lose decisions as part of the cell competition process. This is Calcium channel flower homolog (Cacfd1) from Mus musculus (Mouse).